The primary structure comprises 101 residues: Urease subunit gamma (101 aa).

The protein belongs to the urease gamma subunit family. In terms of assembly, heterotrimer of UreA (gamma), UreB (beta) and UreC (alpha) subunits. Three heterotrimers associate to form the active enzyme.

It is found in the cytoplasm. The catalysed reaction is urea + 2 H2O + H(+) = hydrogencarbonate + 2 NH4(+). It participates in nitrogen metabolism; urea degradation; CO(2) and NH(3) from urea (urease route): step 1/1. This is Urease subunit gamma from Corynebacterium kroppenstedtii (strain DSM 44385 / JCM 11950 / CIP 105744 / CCUG 35717).